Consider the following 523-residue polypeptide: ATP synthase subunit alpha (523 aa).

Residue 173 to 180 coordinates ATP; that stretch reads GDRQTGKT.

Belongs to the ATPase alpha/beta chains family. As to quaternary structure, F-type ATPases have 2 components, CF(1) - the catalytic core - and CF(0) - the membrane proton channel. CF(1) has five subunits: alpha(3), beta(3), gamma(1), delta(1), epsilon(1). CF(0) has three main subunits: a(1), b(2) and c(9-12). The alpha and beta chains form an alternating ring which encloses part of the gamma chain. CF(1) is attached to CF(0) by a central stalk formed by the gamma and epsilon chains, while a peripheral stalk is formed by the delta and b chains.

It localises to the cell membrane. The catalysed reaction is ATP + H2O + 4 H(+)(in) = ADP + phosphate + 5 H(+)(out). Functionally, produces ATP from ADP in the presence of a proton gradient across the membrane. The alpha chain is a regulatory subunit. This is ATP synthase subunit alpha from Streptomyces griseus subsp. griseus (strain JCM 4626 / CBS 651.72 / NBRC 13350 / KCC S-0626 / ISP 5235).